Reading from the N-terminus, the 197-residue chain is Probable UbiX-like flavin prenyltransferase (197 aa).

Residues 9–11 (GAT), S36, 87–90 (SMKT), and R122 each bind FMN.

It belongs to the UbiX/PAD1 family. YclB subfamily. Homododecamer.

It carries out the reaction dimethylallyl phosphate + FMNH2 = prenylated FMNH2 + phosphate. Involved in the non-oxidative decarboxylation and detoxification of phenolic derivatives under both aerobic and anaerobic conditions. Flavin prenyltransferase that catalyzes the synthesis of the prenylated FMN cofactor (prenyl-FMN) for phenolic acid decarboxylase. The sequence is that of Probable UbiX-like flavin prenyltransferase from Escherichia coli O157:H7.